The primary structure comprises 99 residues: C-C motif chemokine 8 (99 aa).

A signal peptide spans 1-23 (MKVSAGILCLLLVAATFGTQVLA). Glutamine 24 carries the post-translational modification Pyrrolidone carboxylic acid. 2 disulfide bridges follow: cysteine 34/cysteine 59 and cysteine 35/cysteine 75.

The protein belongs to the intercrine beta (chemokine CC) family. Monomer or homodimer; in equilibrium.

It localises to the secreted. In terms of biological role, chemotactic factor that attracts monocytes. This protein can bind heparin. This Bos taurus (Bovine) protein is C-C motif chemokine 8 (CCL8).